The primary structure comprises 137 residues: Small ribosomal subunit protein uS12 (137 aa).

Positions 1-57 (MPTINQLVRKPRKSKVEKSKSPALNVGYNSLKRVPTNESAPQKRGVATRVGTMTPKK) are disordered. A 3-methylthioaspartic acid modification is found at aspartate 102.

This sequence belongs to the universal ribosomal protein uS12 family. As to quaternary structure, part of the 30S ribosomal subunit. Contacts proteins S8 and S17. May interact with IF1 in the 30S initiation complex.

In terms of biological role, with S4 and S5 plays an important role in translational accuracy. Functionally, interacts with and stabilizes bases of the 16S rRNA that are involved in tRNA selection in the A site and with the mRNA backbone. Located at the interface of the 30S and 50S subunits, it traverses the body of the 30S subunit contacting proteins on the other side and probably holding the rRNA structure together. The combined cluster of proteins S8, S12 and S17 appears to hold together the shoulder and platform of the 30S subunit. In Streptococcus gordonii (strain Challis / ATCC 35105 / BCRC 15272 / CH1 / DL1 / V288), this protein is Small ribosomal subunit protein uS12.